Consider the following 298-residue polypeptide: Rhodopsin (298 aa).

The Extracellular portion of the chain corresponds to 1 to 15 (IHLHWYEYPPMNPMM). A helical membrane pass occupies residues 16 to 40 (YPLLLIFMLFTGILCLAGNFVTIWV). The Cytoplasmic segment spans residues 41-52 (FMNTKSLRTPAN). A helical transmembrane segment spans residues 53–75 (LLVVNLAMSDFLMMFTMFPPMMV). Residues 76-89 (TCYYHTWTLGPTFC) lie on the Extracellular side of the membrane. Cys89 and Cys166 are disulfide-bonded. Residues 90 to 112 (QVYAFLGNLCGCASIWTMVFITF) form a helical membrane-spanning segment. The 'Ionic lock' involved in activated form stabilization motif lies at 113 to 115 (DRY). The Cytoplasmic segment spans residues 113-131 (DRYNVIVKGVAGEPLSTKK). A helical transmembrane segment spans residues 132–152 (ASLWILTIWVLSTTWCMAPFF). At 153 to 179 (GWNHYVPEGNLTGCGTDYLSEDILSRS) the chain is on the extracellular side. A glycan (N-linked (GlcNAc...) asparagine) is linked at Asn162. The helical transmembrane segment at 180–201 (YLYVYSTWVYFLPLAITIYCYV) threads the bilayer. Over 202–242 (FIIKAVAAHEKGMRDQAKKMGIKSLRNEEAQKTSAECRLAK) the chain is Cytoplasmic. Residues 243–264 (IAMTTVALWFIAWTPYLLINWV) traverse the membrane as a helical segment. Residues 265-275 (GMFARSYLSPV) are Extracellular-facing. The chain crosses the membrane as a helical span at residues 276 to 297 (YTIWGYVFAKANAVYNPIVYAI). Lys285 is subject to N6-(retinylidene)lysine.

Belongs to the G-protein coupled receptor 1 family. Opsin subfamily. As to quaternary structure, homodimer. Interacts with GNAQ. Contains one covalently linked retinal chromophore.

It is found in the cell projection. Its subcellular location is the rhabdomere membrane. Functionally, photoreceptor required for image-forming vision at low light intensity. Can use both retinal and 3-dehydroretinal as visual pigment. Light-induced isomerization of 11-cis to all-trans retinal triggers a conformational change that activates signaling via G-proteins. Signaling via GNAQ probably mediates the activation of phospholipase C. This chain is Rhodopsin (RHO), found in Procambarus orcinus (Crayfish).